Consider the following 882-residue polypeptide: Valine--tRNA ligase (882 aa).

The 'HIGH' region motif lies at 48-58 (PNVTGKLHLGH). The 'KMSKS' region motif lies at 524-528 (KMSKS). Residue lysine 527 coordinates ATP. The stretch at 809–882 (LAELLDLDEE…KRLAELKAAR (74 aa)) forms a coiled coil. The tract at residues 844 to 866 (GFTDRAPEKVVQEERDKQADYEQ) is disordered. Over residues 845–863 (FTDRAPEKVVQEERDKQAD) the composition is skewed to basic and acidic residues.

The protein belongs to the class-I aminoacyl-tRNA synthetase family. ValS type 1 subfamily. As to quaternary structure, monomer.

The protein localises to the cytoplasm. The enzyme catalyses tRNA(Val) + L-valine + ATP = L-valyl-tRNA(Val) + AMP + diphosphate. Its function is as follows. Catalyzes the attachment of valine to tRNA(Val). As ValRS can inadvertently accommodate and process structurally similar amino acids such as threonine, to avoid such errors, it has a 'posttransfer' editing activity that hydrolyzes mischarged Thr-tRNA(Val) in a tRNA-dependent manner. This chain is Valine--tRNA ligase, found in Latilactobacillus sakei subsp. sakei (strain 23K) (Lactobacillus sakei subsp. sakei).